A 412-amino-acid polypeptide reads, in one-letter code: Serine hydroxymethyltransferase (412 aa).

Residues L117 and 121–123 (GHL) each bind (6S)-5,6,7,8-tetrahydrofolate. K226 bears the N6-(pyridoxal phosphate)lysine mark. (6S)-5,6,7,8-tetrahydrofolate is bound at residue 349-351 (SPF).

Belongs to the SHMT family. Homodimer. It depends on pyridoxal 5'-phosphate as a cofactor.

It localises to the cytoplasm. It carries out the reaction (6R)-5,10-methylene-5,6,7,8-tetrahydrofolate + glycine + H2O = (6S)-5,6,7,8-tetrahydrofolate + L-serine. It participates in one-carbon metabolism; tetrahydrofolate interconversion. The protein operates within amino-acid biosynthesis; glycine biosynthesis; glycine from L-serine: step 1/1. In terms of biological role, catalyzes the reversible interconversion of serine and glycine with tetrahydrofolate (THF) serving as the one-carbon carrier. This reaction serves as the major source of one-carbon groups required for the biosynthesis of purines, thymidylate, methionine, and other important biomolecules. Also exhibits THF-independent aldolase activity toward beta-hydroxyamino acids, producing glycine and aldehydes, via a retro-aldol mechanism. The sequence is that of Serine hydroxymethyltransferase from Oleidesulfovibrio alaskensis (strain ATCC BAA-1058 / DSM 17464 / G20) (Desulfovibrio alaskensis).